We begin with the raw amino-acid sequence, 188 residues long: Elongation factor P (188 aa).

The protein belongs to the elongation factor P family.

It localises to the cytoplasm. The protein operates within protein biosynthesis; polypeptide chain elongation. In terms of biological role, involved in peptide bond synthesis. Stimulates efficient translation and peptide-bond synthesis on native or reconstituted 70S ribosomes in vitro. Probably functions indirectly by altering the affinity of the ribosome for aminoacyl-tRNA, thus increasing their reactivity as acceptors for peptidyl transferase. The sequence is that of Elongation factor P from Pseudomonas aeruginosa (strain LESB58).